We begin with the raw amino-acid sequence, 156 residues long: Putative pre-16S rRNA nuclease (156 aa).

The protein belongs to the YqgF nuclease family.

It localises to the cytoplasm. Could be a nuclease involved in processing of the 5'-end of pre-16S rRNA. The protein is Putative pre-16S rRNA nuclease of Ehrlichia chaffeensis (strain ATCC CRL-10679 / Arkansas).